Reading from the N-terminus, the 140-residue chain is Protein SamA (140 aa).

Catalysis depends on for autocatalytic cleavage activity residues Ser61 and Lys98.

It belongs to the peptidase S24 family.

Involved in UV protection and mutation. In Salmonella typhimurium (strain LT2 / SGSC1412 / ATCC 700720), this protein is Protein SamA (samA).